We begin with the raw amino-acid sequence, 1028 residues long: Golgin subfamily A member 2 (1028 aa).

The disordered stretch occupies residues 1–112 (MADQNRQIKL…NRPLSSTESL (112 aa)). The segment covering 40-60 (KGDQTDAPADRRSPENERVDV) has biased composition (basic and acidic residues). Residues 74–87 (NPASAINTDNSAPQ) are compositionally biased toward polar residues. Coiled-coil stretches lie at residues 162–200 (NTQL…EQGA), 233–388 (ARQK…YAVQ), 414–690 (RDST…LLNG), 738–769 (LSRV…LTAL), and 799–840 (HEAL…LSGE). Residues 259–280 (RTLSSVSTQQKQHERHNKELEK) are disordered. A disordered region spans residues 756–791 (RRIHQDTRQQLTALSHDHHHHHHHEPHSTCAETDGS). The disordered stretch occupies residues 944-981 (AMDVSSSPQSSTAEIQSQSSERPAADPISSPSLRPQED). A compositionally biased stretch (polar residues) spans 945-964 (MDVSSSPQSSTAEIQSQSSE).

The protein belongs to the GOLGA2 family.

The protein resides in the golgi apparatus. It is found in the cis-Golgi network membrane. It localises to the endoplasmic reticulum-Golgi intermediate compartment membrane. Its subcellular location is the cytoplasm. The protein localises to the cytoskeleton. The protein resides in the spindle pole. Its function is as follows. Peripheral membrane component of the cis-Golgi stack that acts as a membrane skeleton that maintains the structure of the Golgi apparatus, and as a vesicle thether that facilitates vesicle fusion to the Golgi membrane. Required for normal protein transport from the endoplasmic reticulum to the Golgi apparatus and the cell membrane. Plays a central role in mitotic Golgi disassembly. Also plays a key role in spindle pole assembly and centrosome organization. It probably promotes mitotic spindle pole assembly by activating assembly factors to nucleate microtubules around the Golgi and capture them to couple mitotic membranes to the spindle. Also required for the Golgi ribbon formation and glycosylation of membrane and secretory proteins. In Danio rerio (Zebrafish), this protein is Golgin subfamily A member 2.